The chain runs to 155 residues: Ribosome maturation factor RimP (155 aa).

It belongs to the RimP family.

The protein resides in the cytoplasm. In terms of biological role, required for maturation of 30S ribosomal subunits. The sequence is that of Ribosome maturation factor RimP from Synechococcus sp. (strain CC9902).